The chain runs to 99 residues: Small ribosomal subunit protein eS24 (99 aa).

It belongs to the eukaryotic ribosomal protein eS24 family.

This Thermoplasma volcanium (strain ATCC 51530 / DSM 4299 / JCM 9571 / NBRC 15438 / GSS1) protein is Small ribosomal subunit protein eS24 (rps2e).